Consider the following 148-residue polypeptide: Phosphopantetheine adenylyltransferase (148 aa).

This sequence belongs to the eukaryotic CoaD family.

It localises to the cytoplasm. It carries out the reaction (R)-4'-phosphopantetheine + ATP + H(+) = 3'-dephospho-CoA + diphosphate. The protein operates within cofactor biosynthesis; coenzyme A biosynthesis. Reversibly transfers an adenylyl group from ATP to 4'-phosphopantetheine, yielding dephospho-CoA (dPCoA) and pyrophosphate. In Archaeoglobus fulgidus (strain ATCC 49558 / DSM 4304 / JCM 9628 / NBRC 100126 / VC-16), this protein is Phosphopantetheine adenylyltransferase.